Reading from the N-terminus, the 35-residue chain is Cupiennin-1d (35 aa).

E35 carries the glutamic acid 1-amide modification.

This sequence belongs to the cationic peptide 04 (cupiennin) family. 01 subfamily. In terms of tissue distribution, expressed by the venom gland.

Its subcellular location is the secreted. Its function is as follows. Has antimicrobial activity against B.subtilis, E.coli, E.faecalis, P.aeruginosa, and S.aureus. Has insecticidal and hemolytic activities. Probably acts by disturbing membrane function with its amphipathic structure. This Cupiennius salei (American wandering spider) protein is Cupiennin-1d.